Reading from the N-terminus, the 259-residue chain is DNA repair protein RecO (259 aa).

Belongs to the RecO family.

Its function is as follows. Involved in DNA repair and RecF pathway recombination. In Rhizobium rhizogenes (strain K84 / ATCC BAA-868) (Agrobacterium radiobacter), this protein is DNA repair protein RecO.